A 99-amino-acid polypeptide reads, in one-letter code: PE-PGRS family protein PE25 (99 aa).

The region spanning 1–92 (MSFVITNPEA…GADKYATAEA (92 aa)) is the PE domain. At serine 2 the chain carries N-acetylserine.

Belongs to the mycobacterial PE family. In terms of assembly, forms a heterodimer with PPE41. The dimer forms a 1:1:1 heterotrimeric complex with EspG5. Interacts with PPE51.

It localises to the secreted. Functionally, the PE25/PPE41 dimer induces both a strong humoral and cellular immune response. PE25 protein alone induces low response. The dimer induces necrosis, but not apoptosis, in mouse macrophage cells. It also induces activation and maturation of mouse dendritic cells and drives Th2-biased immune responses. This is PE-PGRS family protein PE25 from Mycobacterium tuberculosis (strain ATCC 25618 / H37Rv).